Reading from the N-terminus, the 400-residue chain is 2-octaprenylphenol hydroxylase (400 aa).

Residues R49–A52 and L297–N303 contribute to the FAD site.

This sequence belongs to the UbiH/COQ6 family. In terms of assembly, homotetramer. Component of the Ubi complex metabolon, which regroups five ubiquinone biosynthesis proteins (UbiE, UbiF, UbiG, UbiH and UbiI) and two accessory factors (UbiK and the lipid-binding protein UbiJ). Requires FAD as cofactor.

Its subcellular location is the cytoplasm. It carries out the reaction 2-all-trans-octaprenylphenol + NADPH + O2 + H(+) = 3-(all-trans-octaprenyl)benzene-1,2-diol + NADP(+) + H2O. It catalyses the reaction a 2-(all-trans-polyprenyl)phenol + NADPH + O2 + H(+) = a 3-(all-trans-polyprenyl)benzene-1,2-diol + NADP(+) + H2O. Its pathway is cofactor biosynthesis; ubiquinone biosynthesis. In terms of biological role, FAD-dependent monooxygenase required for the aerobic hydroxylation of 2-octaprenylphenol to 2-octaprenyl-6-hydroxy-phenol, the first hydroxylation step in coenzyme Q (ubiquinone) biosynthesis. In Escherichia coli (strain K12), this protein is 2-octaprenylphenol hydroxylase.